The chain runs to 375 residues: Circadian-associated transcriptional repressor (375 aa).

Low complexity predominate over residues 1 to 32 (MDSPSSVSSYSSSSLSPSFSTSSVNSDFSFPS). Disordered stretches follow at residues 1-102 (MDSP…LNTQ), 192-218 (KSSS…AASP), and 351-375 (DREM…DPQP). Positions 33–46 (DNEREGKGTHELRP) are enriched in basic and acidic residues.

As to quaternary structure, interacts with BMAL1, PER2, CRY2, BHLHE41, HDAC1 NR3C1.

It localises to the nucleus. Its subcellular location is the PML body. Its function is as follows. Transcriptional repressor which forms a negative regulatory component of the circadian clock and acts independently of the circadian transcriptional repressors: CRY1, CRY2 and BHLHE41. In a histone deacetylase-dependent manner represses the transcriptional activator activity of the CLOCK-BMAL1 heterodimer. Abrogates the interaction of BMAL1 with the transcriptional coactivator CREBBP and can repress the histone acetyl-transferase activity of the CLOCK-BMAL1 heterodimer, reducing histone acetylation of its target genes. Rhythmically binds the E-box elements (5'-CACGTG-3') on circadian gene promoters and its occupancy shows circadian oscillation antiphasic to BMAL1. Interacts with the glucocorticoid receptor (NR3C1) and contributes to the repressive function in the glucocorticoid response. The sequence is that of Circadian-associated transcriptional repressor (Ciart) from Mus musculus (Mouse).